The following is a 268-amino-acid chain: MKRKPAVAGYFYPERKDELYSLLSSFAIPEQHVSGTIIGAVVPHAGIIYSGRTAMYSYRAIEKSAVRDFVIIGPNHRPLTPYASLYPEGEWSTPLGDALINDRMAEALYRDSNYIVKDEESHLMEHSVEVQIPFLQYLFGDGFRFVPVILGDQEIDVARDIGEAIMKIEDPFIFIASSDFTHYEDAKRVEKKDMDLISAILTLDLDKFYSVLEKENVTACGYGAIAALMYYTKKRGGRMIFLNHSNSGDVTGDYSEVVGYASLVSVIP.

It belongs to the MEMO1 family.

This Thermoplasma acidophilum (strain ATCC 25905 / DSM 1728 / JCM 9062 / NBRC 15155 / AMRC-C165) protein is MEMO1 family protein Ta0237.